A 326-amino-acid chain; its full sequence is 3-isopropylmalate dehydrogenase (326 aa).

4 residues coordinate substrate: R81, R91, R112, and D198. 3 residues coordinate Mg(2+): D198, D222, and D226. 255–267 (GAAFDIAGKGIAN) is an NAD(+) binding site.

It belongs to the isocitrate and isopropylmalate dehydrogenases family. As to quaternary structure, homotetramer. Mg(2+) serves as cofactor. The cofactor is Mn(2+).

It localises to the cytoplasm. It catalyses the reaction (2R,3S)-3-isopropylmalate + NAD(+) = 4-methyl-2-oxopentanoate + CO2 + NADH. It functions in the pathway amino-acid biosynthesis; L-leucine biosynthesis; L-leucine from 3-methyl-2-oxobutanoate: step 3/4. Functionally, catalyzes the oxidation of 3-carboxy-2-hydroxy-4-methylpentanoate (3-isopropylmalate) to 3-carboxy-4-methyl-2-oxopentanoate. The product decarboxylates to 4-methyl-2 oxopentanoate. The polypeptide is 3-isopropylmalate dehydrogenase (leuB) (Archaeoglobus fulgidus (strain ATCC 49558 / DSM 4304 / JCM 9628 / NBRC 100126 / VC-16)).